The primary structure comprises 219 residues: MQEHSPIVLLGGTFDPIHFGHLRTALELQQHFGESAEVRLIPCGDPRHRSAPKASGEHRLAMLRLALEGEPSLRIDEVEVRRTGASYTVDTLLELRQEVGNLRPLIFVMGTDAFESLPKWRRWLEIIQLAHIMVVNRPGWSFCEQGELGDFLRQHSAESNNDLIRQPAGKVGFITLTQMGISSSKVRELIGLRLSPRFLLPDSVWRYIRQHRLYGAVNA.

The protein belongs to the NadD family.

It carries out the reaction nicotinate beta-D-ribonucleotide + ATP + H(+) = deamido-NAD(+) + diphosphate. It participates in cofactor biosynthesis; NAD(+) biosynthesis; deamido-NAD(+) from nicotinate D-ribonucleotide: step 1/1. Its function is as follows. Catalyzes the reversible adenylation of nicotinate mononucleotide (NaMN) to nicotinic acid adenine dinucleotide (NaAD). This chain is Probable nicotinate-nucleotide adenylyltransferase, found in Hahella chejuensis (strain KCTC 2396).